We begin with the raw amino-acid sequence, 49 residues long: YLYQWLGAPAPYPDPLEPKREVCELNPDCDELADHIGFQEAYRRFYGPV.

The 47-residue stretch at 1 to 47 folds into the Gla domain; that stretch reads YLYQWLGAPAPYPDPLEPKREVCELNPDCDELADHIGFQEAYRRFYG. Position 9 is a 4-hydroxyproline (proline 9). Ca(2+) is bound by residues glutamate 17, glutamate 21, glutamate 24, and aspartate 30. A 4-carboxyglutamate mark is found at glutamate 17, glutamate 21, and glutamate 24. A disulfide bridge connects residues cysteine 23 and cysteine 29.

Belongs to the osteocalcin/matrix Gla protein family. Post-translationally, gamma-carboxyglutamate residues are formed by vitamin K dependent carboxylation by GGCX. These residues are essential for the binding of calcium. Decarboxylation promotes the hormone activity.

The protein localises to the secreted. In terms of biological role, the carboxylated form is one of the main organic components of the bone matrix, which constitutes 1-2% of the total bone protein: it acts as a negative regulator of bone formation and is required to limit bone formation without impairing bone resorption or mineralization. The carboxylated form binds strongly to apatite and calcium. The uncarboxylated form acts as a hormone secreted by osteoblasts, which regulates different cellular processes, such as energy metabolism, male fertility and brain development. Regulates of energy metabolism by acting as a hormone favoring pancreatic beta-cell proliferation, insulin secretion and sensitivity and energy expenditure. Uncarboxylated osteocalcin hormone also promotes testosterone production in the testes: acts as a ligand for G protein-coupled receptor GPRC6A at the surface of Leydig cells, initiating a signaling response that promotes the expression of enzymes required for testosterone synthesis in a CREB-dependent manner. Also acts as a regulator of brain development: osteocalcin hormone crosses the blood-brain barrier and acts as a ligand for GPR158 on neurons, initiating a signaling response that prevents neuronal apoptosis in the hippocampus, favors the synthesis of all monoamine neurotransmitters and inhibits that of gamma-aminobutyric acid (GABA). Osteocalcin also crosses the placenta during pregnancy and maternal osteocalcin is required for fetal brain development. The protein is Osteocalcin (BGLAP) of Macaca fascicularis (Crab-eating macaque).